We begin with the raw amino-acid sequence, 267 residues long: Tryptophan synthase alpha chain (267 aa).

Residues glutamate 49 and aspartate 60 each act as proton acceptor in the active site.

This sequence belongs to the TrpA family. Tetramer of two alpha and two beta chains.

It catalyses the reaction (1S,2R)-1-C-(indol-3-yl)glycerol 3-phosphate + L-serine = D-glyceraldehyde 3-phosphate + L-tryptophan + H2O. It participates in amino-acid biosynthesis; L-tryptophan biosynthesis; L-tryptophan from chorismate: step 5/5. The alpha subunit is responsible for the aldol cleavage of indoleglycerol phosphate to indole and glyceraldehyde 3-phosphate. This is Tryptophan synthase alpha chain from Acaryochloris marina (strain MBIC 11017).